The sequence spans 247 residues: Triosephosphate isomerase (247 aa).

A substrate-binding site is contributed by 9 to 11 (NWK). H94 serves as the catalytic Electrophile. The active-site Proton acceptor is E166. Substrate contacts are provided by residues G172, S211, and 232–233 (GG).

Belongs to the triosephosphate isomerase family. In terms of assembly, homodimer.

The protein resides in the cytoplasm. The catalysed reaction is D-glyceraldehyde 3-phosphate = dihydroxyacetone phosphate. It functions in the pathway carbohydrate biosynthesis; gluconeogenesis. The protein operates within carbohydrate degradation; glycolysis; D-glyceraldehyde 3-phosphate from glycerone phosphate: step 1/1. Its function is as follows. Involved in the gluconeogenesis. Catalyzes stereospecifically the conversion of dihydroxyacetone phosphate (DHAP) to D-glyceraldehyde-3-phosphate (G3P). The sequence is that of Triosephosphate isomerase from Cupriavidus taiwanensis (strain DSM 17343 / BCRC 17206 / CCUG 44338 / CIP 107171 / LMG 19424 / R1) (Ralstonia taiwanensis (strain LMG 19424)).